The primary structure comprises 265 residues: 4-hydroxy-tetrahydrodipicolinate reductase (265 aa).

9-14 (GPRGRM) provides a ligand contact to NAD(+). K37 contributes to the NADP(+) binding site. Residues 99–101 (GTT) and 125–128 (APNF) contribute to the NAD(+) site. H155 serves as the catalytic Proton donor/acceptor. H156 serves as a coordination point for (S)-2,3,4,5-tetrahydrodipicolinate. Catalysis depends on K159, which acts as the Proton donor. 165–166 (GT) lines the (S)-2,3,4,5-tetrahydrodipicolinate pocket. The span at 178–190 (RESQKQGHPKEEE) shows a compositional bias: basic and acidic residues. The tract at residues 178-200 (RESQKQGHPKEEETLPGARGADM) is disordered.

Belongs to the DapB family.

Its subcellular location is the cytoplasm. The enzyme catalyses (S)-2,3,4,5-tetrahydrodipicolinate + NAD(+) + H2O = (2S,4S)-4-hydroxy-2,3,4,5-tetrahydrodipicolinate + NADH + H(+). It carries out the reaction (S)-2,3,4,5-tetrahydrodipicolinate + NADP(+) + H2O = (2S,4S)-4-hydroxy-2,3,4,5-tetrahydrodipicolinate + NADPH + H(+). It participates in amino-acid biosynthesis; L-lysine biosynthesis via DAP pathway; (S)-tetrahydrodipicolinate from L-aspartate: step 4/4. Functionally, catalyzes the conversion of 4-hydroxy-tetrahydrodipicolinate (HTPA) to tetrahydrodipicolinate. This chain is 4-hydroxy-tetrahydrodipicolinate reductase, found in Oceanobacillus iheyensis (strain DSM 14371 / CIP 107618 / JCM 11309 / KCTC 3954 / HTE831).